Reading from the N-terminus, the 201-residue chain is Ribonuclease HII (201 aa).

Residues A15–P201 enclose the RNase H type-2 domain. A divalent metal cation is bound by residues D21, E22, and D113.

Belongs to the RNase HII family. Mn(2+) is required as a cofactor. It depends on Mg(2+) as a cofactor.

Its subcellular location is the cytoplasm. The enzyme catalyses Endonucleolytic cleavage to 5'-phosphomonoester.. In terms of biological role, endonuclease that specifically degrades the RNA of RNA-DNA hybrids. In Bordetella pertussis (strain Tohama I / ATCC BAA-589 / NCTC 13251), this protein is Ribonuclease HII.